A 193-amino-acid polypeptide reads, in one-letter code: Xanthine phosphoribosyltransferase (193 aa).

Leucine 20 and threonine 27 together coordinate xanthine. Alanine 128–alanine 132 contributes to the 5-phospho-alpha-D-ribose 1-diphosphate binding site. Lysine 156 serves as a coordination point for xanthine.

Belongs to the purine/pyrimidine phosphoribosyltransferase family. Xpt subfamily. As to quaternary structure, homodimer.

The protein localises to the cytoplasm. The enzyme catalyses XMP + diphosphate = xanthine + 5-phospho-alpha-D-ribose 1-diphosphate. It functions in the pathway purine metabolism; XMP biosynthesis via salvage pathway; XMP from xanthine: step 1/1. Converts the preformed base xanthine, a product of nucleic acid breakdown, to xanthosine 5'-monophosphate (XMP), so it can be reused for RNA or DNA synthesis. The sequence is that of Xanthine phosphoribosyltransferase from Streptococcus pneumoniae (strain P1031).